A 635-amino-acid polypeptide reads, in one-letter code: Threonine--tRNA ligase (635 aa).

The TGS domain occupies 1 to 58; sequence MIHVTCNQEAFELPEGASAMDLANKMKQSHCFAGALINDQEKDLSTTLQDGDTVLFLT. Residues 237–528 form a catalytic region; that stretch reads DHRVLGTKLD…LIEHFKGRFP (292 aa). Zn(2+) contacts are provided by cysteine 328, histidine 379, and histidine 505.

Belongs to the class-II aminoacyl-tRNA synthetase family. In terms of assembly, homodimer. Zn(2+) is required as a cofactor.

Its subcellular location is the cytoplasm. It catalyses the reaction tRNA(Thr) + L-threonine + ATP = L-threonyl-tRNA(Thr) + AMP + diphosphate + H(+). Catalyzes the attachment of threonine to tRNA(Thr) in a two-step reaction: L-threonine is first activated by ATP to form Thr-AMP and then transferred to the acceptor end of tRNA(Thr). Also edits incorrectly charged L-seryl-tRNA(Thr). The protein is Threonine--tRNA ligase of Chlamydia trachomatis serovar A (strain ATCC VR-571B / DSM 19440 / HAR-13).